Consider the following 310-residue polypeptide: N-acetyl-gamma-glutamyl-phosphate reductase (310 aa).

C117 is an active-site residue.

Belongs to the NAGSA dehydrogenase family. Type 2 subfamily.

It localises to the cytoplasm. The enzyme catalyses N-acetyl-L-glutamate 5-semialdehyde + phosphate + NADP(+) = N-acetyl-L-glutamyl 5-phosphate + NADPH + H(+). It participates in amino-acid biosynthesis; L-arginine biosynthesis; N(2)-acetyl-L-ornithine from L-glutamate: step 3/4. In terms of biological role, catalyzes the NADPH-dependent reduction of N-acetyl-5-glutamyl phosphate to yield N-acetyl-L-glutamate 5-semialdehyde. The protein is N-acetyl-gamma-glutamyl-phosphate reductase of Brucella melitensis biotype 1 (strain ATCC 23456 / CCUG 17765 / NCTC 10094 / 16M).